The primary structure comprises 356 residues: MNTIDLPSLAQATPTIRHDWTREEAAAIYYAPFMDLMFRAATIHRQSFDPNKVQCNQLLNVKTGGCAEDCGYCGQSAHHHTDLPASKLMAPADVIESAKAAKAGGATRYCMGAAWRSPKDRDMAPVIEMVKGVKALGMEACVTLGMLSDDQAKQLADAGLDYYNHNLDTSEEFYPSVVKTRTYGDRLNTLHKVQDAGIKVCCGGILGLGEKPTDRVEMLRTLANLAKHPESVPINLLIPIEGTPISLTATPVDPIAFVRTIALARIMMPLSDVRLAAGRTAMSDEMQTLCFLAGANSIFIGDTLLTTPNPGDNKDRSLFDRLGLEPRDDHGVHEHSSHSHTHDQGHDHGPHGHSHG.

The Radical SAM core domain occupies 51–270 (NKVQCNQLLN…IALARIMMPL (220 aa)). Residues cysteine 66, cysteine 70, and cysteine 73 each contribute to the [4Fe-4S] cluster site. 4 residues coordinate [2Fe-2S] cluster: cysteine 110, cysteine 141, cysteine 201, and arginine 274. The tract at residues 310-356 (PGDNKDRSLFDRLGLEPRDDHGVHEHSSHSHTHDQGHDHGPHGHSHG) is disordered. Over residues 312 to 350 (DNKDRSLFDRLGLEPRDDHGVHEHSSHSHTHDQGHDHGP) the composition is skewed to basic and acidic residues.

The protein belongs to the radical SAM superfamily. Biotin synthase family. In terms of assembly, homodimer. [4Fe-4S] cluster serves as cofactor. The cofactor is [2Fe-2S] cluster.

It carries out the reaction (4R,5S)-dethiobiotin + (sulfur carrier)-SH + 2 reduced [2Fe-2S]-[ferredoxin] + 2 S-adenosyl-L-methionine = (sulfur carrier)-H + biotin + 2 5'-deoxyadenosine + 2 L-methionine + 2 oxidized [2Fe-2S]-[ferredoxin]. Its pathway is cofactor biosynthesis; biotin biosynthesis; biotin from 7,8-diaminononanoate: step 2/2. Its function is as follows. Catalyzes the conversion of dethiobiotin (DTB) to biotin by the insertion of a sulfur atom into dethiobiotin via a radical-based mechanism. This chain is Biotin synthase, found in Rhodopseudomonas palustris (strain BisB18).